A 213-amino-acid polypeptide reads, in one-letter code: Holliday junction resolvase RecU (213 aa).

Positions 98, 100, 113, and 132 each coordinate Mg(2+).

It belongs to the RecU family. Mg(2+) serves as cofactor.

It is found in the cytoplasm. The enzyme catalyses Endonucleolytic cleavage at a junction such as a reciprocal single-stranded crossover between two homologous DNA duplexes (Holliday junction).. Endonuclease that resolves Holliday junction intermediates in genetic recombination. Cleaves mobile four-strand junctions by introducing symmetrical nicks in paired strands. Promotes annealing of linear ssDNA with homologous dsDNA. Required for DNA repair, homologous recombination and chromosome segregation. This is Holliday junction resolvase RecU from Ligilactobacillus salivarius (strain UCC118) (Lactobacillus salivarius).